We begin with the raw amino-acid sequence, 99 residues long: NADH-quinone oxidoreductase subunit K (99 aa).

The next 3 membrane-spanning stretches (helical) occupy residues Val-3–Ile-23, Ile-28–Phe-48, and Ile-59–Ile-79.

It belongs to the complex I subunit 4L family. In terms of assembly, NDH-1 is composed of 14 different subunits. Subunits NuoA, H, J, K, L, M, N constitute the membrane sector of the complex.

Its subcellular location is the cell membrane. The catalysed reaction is a quinone + NADH + 5 H(+)(in) = a quinol + NAD(+) + 4 H(+)(out). Its function is as follows. NDH-1 shuttles electrons from NADH, via FMN and iron-sulfur (Fe-S) centers, to quinones in the respiratory chain. The immediate electron acceptor for the enzyme in this species is believed to be a menaquinone. Couples the redox reaction to proton translocation (for every two electrons transferred, four hydrogen ions are translocated across the cytoplasmic membrane), and thus conserves the redox energy in a proton gradient. The polypeptide is NADH-quinone oxidoreductase subunit K (Nocardioides sp. (strain ATCC BAA-499 / JS614)).